Here is a 484-residue protein sequence, read N- to C-terminus: uncharacterized protein (484 aa).

This is an uncharacterized protein from Orgyia pseudotsugata multicapsid polyhedrosis virus (OpMNPV).